The sequence spans 183 residues: Putative NAD(P)H nitroreductase YdjA (183 aa).

Residues 10–12 (RRS), R35, and H39 contribute to the FMN site. 121-126 (AAVAQG) provides a ligand contact to NAD(+). Residue 131–133 (WRS) participates in FMN binding.

Belongs to the nitroreductase family. Homodimer. The cofactor is FMN.

The chain is Putative NAD(P)H nitroreductase YdjA (ydjA) from Escherichia coli O157:H7.